Reading from the N-terminus, the 470-residue chain is Cysteine--tRNA ligase (470 aa).

Cys29 is a Zn(2+) binding site. Positions 31-41 (PTVYNYAHIGN) match the 'HIGH' region motif. Zn(2+)-binding residues include Cys211, His236, and Glu240. The 'KMSKS' region motif lies at 273–277 (KMSKS). Residue Lys276 participates in ATP binding.

The protein belongs to the class-I aminoacyl-tRNA synthetase family. As to quaternary structure, monomer. It depends on Zn(2+) as a cofactor.

It localises to the cytoplasm. The catalysed reaction is tRNA(Cys) + L-cysteine + ATP = L-cysteinyl-tRNA(Cys) + AMP + diphosphate. This is Cysteine--tRNA ligase from Phenylobacterium zucineum (strain HLK1).